The sequence spans 191 residues: Small ribosomal subunit protein uS7 (191 aa).

It belongs to the universal ribosomal protein uS7 family. Part of the 30S ribosomal subunit.

One of the primary rRNA binding proteins, it binds directly to 16S rRNA where it nucleates assembly of the head domain of the 30S subunit. Is located at the subunit interface close to the decoding center. In Methanocaldococcus jannaschii (strain ATCC 43067 / DSM 2661 / JAL-1 / JCM 10045 / NBRC 100440) (Methanococcus jannaschii), this protein is Small ribosomal subunit protein uS7.